A 2715-amino-acid chain; its full sequence is G surface protein, allelic form 156 (2715 aa).

Residues 1-20 form the signal peptide; it reads MNNKFIIFSLLLALVASQTY. 34 PSA repeats span residues 111–171, 177–237, 243–303, 309–366, 372–404, 405–467, 473–530, 536–596, 602–673, 688–748, 752–812, 820–895, 934–1001, 1008–1067, 1073–1141, 1147–1215, 1221–1289, 1295–1363, 1369–1437, 1443–1507, 1513–1578, 1586–1652, 1693–1751, 1759–1819, 1827–1898, 1904–1976, 1984–2044, 2080–2149, 2155–2215, 2219–2286, 2290–2355, 2359–2430, 2434–2500, and 2505–2573; these read KTLD…NTCD, FATD…RICD, LTTD…KACA, IATN…KTCA, NNTHDLCTSYLSTCTVKSGGGCQNRTCANAPTT, MTTN…KTCV, NTTH…KQCV, TTTH…KACS, FTTT…KSCA, GFTF…KTCA, QTTH…ATCA, YDSD…GACT, GLTF…AECA, GLDH…SNCA, GLTT…THCP, GLTD…TECA, GLTN…TECA, GLTK…LNCS, GFVH…TDCA, TITF…ATCD, TFNH…KTCD, RDDD…LNCG, YDTH…KSCT, TTTH…KSCA, YDDD…KSCD, FATD…KNCS, LTSE…KDCQ, GTTH…TSCK, WNND…TSCA, YTTH…QSCA, GTTH…LTCA, and GTAT…TACT.

The protein resides in the cell membrane. In terms of biological role, this protein is the surface antigen or immobilization antigen of Paramecium primaurelia. This Paramecium primaurelia protein is G surface protein, allelic form 156 (156G).